We begin with the raw amino-acid sequence, 230 residues long: Intracellular hyphae protein 1 (230 aa).

The N-terminal stretch at 1 to 18 (MQTSFVALLAVAASLASA) is a signal peptide. Residues 20-102 (PHGGNSYEAS…KNNTLPVPTC (83 aa)) are disordered. Repeat copies occupy residues 30-33 (LPEP), 36-39 (LPEP), 42-45 (LPEP), 46-49 (VEGP), 50-53 (YKPK), 57-60 (LPEP), 65-68 (YKPK), 76-79 (VEGP), 80-83 (YKPK), and 84-87 (LPEP). Residues 30–87 (LPEPTNLPEPTKLPEPVEGPYKPKPPILPEPIKDNYKPKTPILPEHVEGPYKPKLPEP) form a 5 X 4 AA repeats of L-P-E-P region. Residues 46 to 87 (VEGPYKPKPPILPEPIKDNYKPKTPILPEHVEGPYKPKLPEP) are 2 X 4 AA repeats of V-E-G-P. The interval 50–83 (YKPKPPILPEPIKDNYKPKTPILPEHVEGPYKPK) is 3 X 4 AA repeats of Y-K-P-K. The span at 74 to 84 (EHVEGPYKPKL) shows a compositional bias: basic and acidic residues. An N-linked (GlcNAc...) asparagine glycan is attached at Asn94. The LysM 1 domain maps to 108 to 152 (KTHKVKSGESLTTIAEKYDTGICNIAKLNNLADPNFVDLNQDLQI). Residue Asn161 is glycosylated (N-linked (GlcNAc...) asparagine). Residues 183–227 (DIYSVVSGDTLTSIAQALQITLQSLKDANPGVVPEHLNVGQKLNV) form the LysM 2 domain.

In terms of assembly, forms a multimeric structure. Post-translationally, N-glycosylated and may be O-glycosylated. In terms of tissue distribution, expressed in penetration hyphae, infection vesicles and primary hyphae (intracellular hyphae).

It is found in the secreted. The protein localises to the cell wall. Functionally, may have roles in host-pathogen interaction, including establishment and maintenance of biotrophy, prevention of host recognition of the fungus and a barrier to host defense molecules. The protein is Intracellular hyphae protein 1 (CIH1) of Colletotrichum lindemuthianum (Bean anthracnose fungus).